The sequence spans 159 residues: Phosphopantetheine adenylyltransferase (159 aa).

A substrate-binding site is contributed by Thr-10. ATP-binding positions include 10–11 (TF) and His-18. Substrate is bound by residues Lys-42, Met-74, and Arg-88. ATP-binding positions include 89–91 (GLR), Glu-99, and 124–130 (WSFISSS).

It belongs to the bacterial CoaD family. As to quaternary structure, homohexamer. It depends on Mg(2+) as a cofactor.

It localises to the cytoplasm. It catalyses the reaction (R)-4'-phosphopantetheine + ATP + H(+) = 3'-dephospho-CoA + diphosphate. It functions in the pathway cofactor biosynthesis; coenzyme A biosynthesis; CoA from (R)-pantothenate: step 4/5. Its function is as follows. Reversibly transfers an adenylyl group from ATP to 4'-phosphopantetheine, yielding dephospho-CoA (dPCoA) and pyrophosphate. This Escherichia fergusonii (strain ATCC 35469 / DSM 13698 / CCUG 18766 / IAM 14443 / JCM 21226 / LMG 7866 / NBRC 102419 / NCTC 12128 / CDC 0568-73) protein is Phosphopantetheine adenylyltransferase.